The following is a 230-amino-acid chain: MAAILARKSLSALRSRQLVLAGQAWQQGANTSNGTLLGTRTFATNDSFSTDKDDEEREQLAKELSKDWNSVFEQQINTLFLTEMVRGLMLTLKYFFEKKVTINYPFEKGPLSPRFRGEQPLRRYPTGEERCIACKLCEAICPAQAITIEAEAREDGSRRTTRYDIDMTKCIYCGFCQEACPVDAIVEGPNFEFATETHEELLYDKEKLLENGDRWETEIAENLRSESLYR.

A mitochondrion-targeting transit peptide spans 1–42 (MAAILARKSLSALRSRQLVLAGQAWQQGANTSNGTLLGTRTF). 2 consecutive 4Fe-4S ferredoxin-type domains span residues 122-151 (RRYP…IEAE) and 161-190 (TRYD…EGPN). [4Fe-4S] cluster contacts are provided by Cys-131, Cys-134, Cys-137, Cys-141, Cys-170, Cys-173, Cys-176, and Cys-180.

It belongs to the complex I 23 kDa subunit family. In terms of assembly, complex I is composed of about 45 different subunits. This is a component of the iron-sulfur (IP) fragment of the enzyme. [4Fe-4S] cluster is required as a cofactor.

It localises to the mitochondrion. It catalyses the reaction a ubiquinone + NADH + 5 H(+)(in) = a ubiquinol + NAD(+) + 4 H(+)(out). Functionally, core subunit of the mitochondrial membrane respiratory chain NADH dehydrogenase (Complex I) that is believed to belong to the minimal assembly required for catalysis. Complex I functions in the transfer of electrons from NADH to the respiratory chain. The immediate electron acceptor for the enzyme is believed to be ubiquinone. May donate electrons to ubiquinone. In Nicotiana tabacum (Common tobacco), this protein is NADH dehydrogenase [ubiquinone] iron-sulfur protein 8, mitochondrial.